The sequence spans 393 residues: 4-hydroxyphenylpyruvate dioxygenase (393 aa).

An N-acetylthreonine modification is found at Thr-2. 2 consecutive VOC domains span residues 18–149 and 180–338; these read HFHS…LVEK and IIDH…IFTK. N6-succinyllysine is present on Lys-132. His-183 is a Fe cation binding site. A phosphoserine mark is found at Ser-211, Ser-226, and Ser-250. Fe cation-binding residues include His-266 and Glu-349.

Belongs to the 4HPPD family. Homodimer. Fe cation serves as cofactor.

The protein localises to the cytoplasm. It localises to the endoplasmic reticulum membrane. Its subcellular location is the golgi apparatus membrane. It carries out the reaction 3-(4-hydroxyphenyl)pyruvate + O2 = homogentisate + CO2. Its pathway is amino-acid degradation; L-phenylalanine degradation; acetoacetate and fumarate from L-phenylalanine: step 3/6. Its function is as follows. Catalyzes the conversion of 4-hydroxyphenylpyruvic acid to homogentisic acid, one of the steps in tyrosine catabolism. The protein is 4-hydroxyphenylpyruvate dioxygenase (Hpd) of Rattus norvegicus (Rat).